A 141-amino-acid chain; its full sequence is Nucleoside diphosphate kinase (141 aa).

The ATP site is built by lysine 11, phenylalanine 59, arginine 87, threonine 93, arginine 104, and asparagine 114. Histidine 117 acts as the Pros-phosphohistidine intermediate in catalysis.

It belongs to the NDK family. Homotetramer. The cofactor is Mg(2+).

It localises to the cytoplasm. The catalysed reaction is a 2'-deoxyribonucleoside 5'-diphosphate + ATP = a 2'-deoxyribonucleoside 5'-triphosphate + ADP. The enzyme catalyses a ribonucleoside 5'-diphosphate + ATP = a ribonucleoside 5'-triphosphate + ADP. Functionally, major role in the synthesis of nucleoside triphosphates other than ATP. The ATP gamma phosphate is transferred to the NDP beta phosphate via a ping-pong mechanism, using a phosphorylated active-site intermediate. The sequence is that of Nucleoside diphosphate kinase from Acidovorax sp. (strain JS42).